The sequence spans 497 residues: uncharacterized protein (497 aa).

Polar residues predominate over residues 1–16 (MSTTTETVTWSQYKPQ). Positions 1–29 (MSTTTETVTWSQYKPQETQRRLSRSSTIT) are disordered. S64 is modified (phosphoserine). The next 6 membrane-spanning stretches (helical) occupy residues 86–106 (IALV…ALPI), 120–140 (FSGL…YPML), 155–175 (FRPL…YSLA), 180–200 (WLYL…MFLY), 222–242 (LNIL…GILA), and 258–278 (AGSW…SIFF). Residue S295 is modified to Phosphoserine. 6 consecutive transmembrane segments (helical) span residues 309-329 (FMLC…AGYQ), 348-368 (GNFL…STFL), 377-397 (IMLY…VLDA), 407-427 (FVLY…LVSL), 443-463 (VVQV…GAIF), and 468-488 (VGFI…LLYL).

Its subcellular location is the membrane. This is an uncharacterized protein from Schizosaccharomyces pombe (strain 972 / ATCC 24843) (Fission yeast).